A 97-amino-acid chain; its full sequence is Aspartyl/glutamyl-tRNA(Asn/Gln) amidotransferase subunit C (97 aa).

This sequence belongs to the GatC family. Heterotrimer of A, B and C subunits.

It carries out the reaction L-glutamyl-tRNA(Gln) + L-glutamine + ATP + H2O = L-glutaminyl-tRNA(Gln) + L-glutamate + ADP + phosphate + H(+). It catalyses the reaction L-aspartyl-tRNA(Asn) + L-glutamine + ATP + H2O = L-asparaginyl-tRNA(Asn) + L-glutamate + ADP + phosphate + 2 H(+). Allows the formation of correctly charged Asn-tRNA(Asn) or Gln-tRNA(Gln) through the transamidation of misacylated Asp-tRNA(Asn) or Glu-tRNA(Gln) in organisms which lack either or both of asparaginyl-tRNA or glutaminyl-tRNA synthetases. The reaction takes place in the presence of glutamine and ATP through an activated phospho-Asp-tRNA(Asn) or phospho-Glu-tRNA(Gln). The chain is Aspartyl/glutamyl-tRNA(Asn/Gln) amidotransferase subunit C from Prochlorococcus marinus (strain SARG / CCMP1375 / SS120).